The primary structure comprises 162 residues: Dihydrofolate reductase (162 aa).

Positions 3–161 (KITLIAACAE…TRYAFVHYLR (159 aa)) constitute a DHFR domain. 7 to 9 (IAA) is a substrate binding site. Residues 8-9 (AA) and 16-21 (IGAGNA) contribute to the NADP(+) site. Residue D29 participates in substrate binding. 45-48 (GRKT) contributes to the NADP(+) binding site. R60 provides a ligand contact to substrate. NADP(+) is bound by residues 65–68 (ISRQ) and 98–103 (MGGAQI). Residue T117 participates in substrate binding.

It belongs to the dihydrofolate reductase family.

The enzyme catalyses (6S)-5,6,7,8-tetrahydrofolate + NADP(+) = 7,8-dihydrofolate + NADPH + H(+). The protein operates within cofactor biosynthesis; tetrahydrofolate biosynthesis; 5,6,7,8-tetrahydrofolate from 7,8-dihydrofolate: step 1/1. Its function is as follows. Key enzyme in folate metabolism. Catalyzes an essential reaction for de novo glycine and purine synthesis, and for DNA precursor synthesis. In Neisseria meningitidis serogroup B (strain ATCC BAA-335 / MC58), this protein is Dihydrofolate reductase (folA).